A 303-amino-acid chain; its full sequence is Ubiquinone biosynthesis protein COQ4, mitochondrial (303 aa).

Zn(2+) contacts are provided by histidine 191, aspartate 192, histidine 195, and glutamate 207.

The protein belongs to the COQ4 family. As to quaternary structure, component of a multi-subunit COQ enzyme complex, composed of at least COQ3, COQ4, COQ5, COQ6, COQ7 and COQ9. Zn(2+) is required as a cofactor.

The protein localises to the mitochondrion inner membrane. The catalysed reaction is a 4-hydroxy-3-methoxy-5-(all-trans-polyprenyl)benzoate + H(+) = a 2-methoxy-6-(all-trans-polyprenyl)phenol + CO2. It functions in the pathway cofactor biosynthesis; ubiquinone biosynthesis. Its function is as follows. Lyase that catalyzes the C1-decarboxylation of 4-hydroxy-3-methoxy-5-(all-trans-polyprenyl)benzoic acid into 2-methoxy-6-(all-trans-polyprenyl)phenol during ubiquinone biosynthesis. The polypeptide is Ubiquinone biosynthesis protein COQ4, mitochondrial (Komagataella phaffii (strain GS115 / ATCC 20864) (Yeast)).